The primary structure comprises 204 residues: Ribonuclease HII (204 aa).

The region spanning 17-204 (TLIAGVDEVG…KPVKKVLGLL (188 aa)) is the RNase H type-2 domain. A divalent metal cation-binding residues include aspartate 23, glutamate 24, and aspartate 115.

The protein belongs to the RNase HII family. Requires Mn(2+) as cofactor. It depends on Mg(2+) as a cofactor.

Its subcellular location is the cytoplasm. It carries out the reaction Endonucleolytic cleavage to 5'-phosphomonoester.. Its function is as follows. Endonuclease that specifically degrades the RNA of RNA-DNA hybrids. This Psychromonas ingrahamii (strain DSM 17664 / CCUG 51855 / 37) protein is Ribonuclease HII.